The sequence spans 1009 residues: Lateral signaling target protein 2 homolog (1009 aa).

Disordered regions lie at residues 313–460 (PVGS…EEQL), 497–629 (ASED…KRCS), and 777–905 (MQRN…TATA). 3 stretches are compositionally biased toward low complexity: residues 327 to 348 (SSTP…SSSG), 364 to 398 (QRNN…TPTA), and 406 to 427 (PSHS…HPPA). Positions 430-458 (SDGDDEDEDEEEDEEEDELEDTEDDTDEE) are enriched in acidic residues. At Ser541 the chain carries Phosphoserine. Residues 544 to 558 (SEPHRDQGETIKSTE) are compositionally biased toward basic and acidic residues. Residues 562-575 (QQQQQQEQQTLQSS) are compositionally biased toward low complexity. Basic residues-rich tracts occupy residues 576 to 601 (RQRH…HHST) and 609 to 627 (QPHH…GRKR). Residues 780–798 (NNTIDNPSSSNTSSSSATT) are compositionally biased toward low complexity. Residue Ser807 is modified to Phosphoserine. Positions 822-878 (VHQQEQEMQQQQDHQQQQHQHQVQVQLQRQRNNSVGSNTPSSASSTSSSSEQNSPVS) are enriched in low complexity. An FYVE-type zinc finger spans residues 917–977 (DGKAPRCMSC…VCRDCYVREV (61 aa)). The Zn(2+) site is built by Cys923, Cys926, Cys939, Cys942, Cys947, Cys950, Cys969, and Cys972.

It belongs to the lst-2 family.

In terms of biological role, negative regulator of epidermal growth factor receptor (EGFR) signaling. The protein is Lateral signaling target protein 2 homolog of Drosophila persimilis (Fruit fly).